The primary structure comprises 485 residues: Forkhead box protein N3 (485 aa).

2 disordered regions span residues 1 to 54 (MGPV…KGGM) and 85 to 108 (PVQD…DAKQ). A compositionally biased stretch (polar residues) spans 16–30 (ISVSSQCYRSSTLSN). Positions 113 to 209 (KPPYSFSCLI…QALKKTPYHP (97 aa)) form a DNA-binding region, fork-head. Disordered stretches follow at residues 316-357 (MESE…ISSS) and 401-449 (PLVE…MKEA). Residues 338–357 (SSAKSANKRSSSPSDSISSS) are compositionally biased toward low complexity. Residues 410 to 422 (QHKKKQHLLKLRR) are compositionally biased toward basic residues.

In terms of tissue distribution, at early cleavage stages, localized within the animal half of the embryo. At gastrulation, expression expands over the whole embryo excluding the future endodermal cells of the blastopore. During neurulation, expressed in the prospective eye field and in the neural crest cells. Strongly enriched in the eye vesicles at stage 26. From stage 29 onwards, expressed predominantly in the eye, the branchial arches and the vagal ganglion. At stage 38, expressed throughout the head with strongest expression in the head mesenchyme and the eye lens.

Its subcellular location is the nucleus. Acts as a transcriptional repressor. May be involved in DNA damage-inducible cell cycle arrests (checkpoints). The polypeptide is Forkhead box protein N3 (Xenopus laevis (African clawed frog)).